An 85-amino-acid chain; its full sequence is UPF0386 protein VF_0869 (85 aa).

Belongs to the UPF0386 family.

This Aliivibrio fischeri (strain ATCC 700601 / ES114) (Vibrio fischeri) protein is UPF0386 protein VF_0869.